Consider the following 113-residue polypeptide: UPF0482 protein YnfB (113 aa).

A signal peptide spans 1–28 (MKITLSKRIGLLAFLLPCALALSTTVHA).

Belongs to the UPF0482 family.

In Shigella flexneri serotype 5b (strain 8401), this protein is UPF0482 protein YnfB.